A 158-amino-acid polypeptide reads, in one-letter code: MAKKKTQNSNTIALNKKARHDYFIEERFEAGVSLAGWEVKALRAGKGQLTDSYVIFKNGEAWLLGAQIQPLPQASTHFVTDPTRTRKLLLHRKELTKLKEATEQKGHTVVATALYWKHHLVKCEIATAKGKQLHDKRQTEKERDWNKQKQRILQTNQR.

The tract at residues 131-158 (KQLHDKRQTEKERDWNKQKQRILQTNQR) is disordered. A compositionally biased stretch (basic and acidic residues) spans 132–147 (QLHDKRQTEKERDWNK).

Belongs to the SmpB family.

It is found in the cytoplasm. Functionally, required for rescue of stalled ribosomes mediated by trans-translation. Binds to transfer-messenger RNA (tmRNA), required for stable association of tmRNA with ribosomes. tmRNA and SmpB together mimic tRNA shape, replacing the anticodon stem-loop with SmpB. tmRNA is encoded by the ssrA gene; the 2 termini fold to resemble tRNA(Ala) and it encodes a 'tag peptide', a short internal open reading frame. During trans-translation Ala-aminoacylated tmRNA acts like a tRNA, entering the A-site of stalled ribosomes, displacing the stalled mRNA. The ribosome then switches to translate the ORF on the tmRNA; the nascent peptide is terminated with the 'tag peptide' encoded by the tmRNA and targeted for degradation. The ribosome is freed to recommence translation, which seems to be the essential function of trans-translation. In Teredinibacter turnerae (strain ATCC 39867 / T7901), this protein is SsrA-binding protein.